The sequence spans 145 residues: Large ribosomal subunit protein uL15 (145 aa).

The disordered stretch occupies residues 1–57 (MKLNDLSPAPGSRREKHRPGRGIGSGLGKTGGRGHKGQTSRSGGTIAPGFEGGQQPL). Positions 21–31 (RGIGSGLGKTG) are enriched in gly residues.

Belongs to the universal ribosomal protein uL15 family. In terms of assembly, part of the 50S ribosomal subunit.

In terms of biological role, binds to the 23S rRNA. This is Large ribosomal subunit protein uL15 from Pseudomonas fluorescens (strain Pf0-1).